We begin with the raw amino-acid sequence, 170 residues long: Methanogen homoaconitase small subunit (170 aa).

Residues 24–27 (YLRT) carry the YLRT motif.

Belongs to the LeuD family. LeuD type 2 subfamily. Heterotetramer of 2 HacA and 2 HacB proteins. Cannot form a complex with LeuC.

It carries out the reaction (2R)-homocitrate = (2R,3S)-homoisocitrate. The enzyme catalyses (2R)-homocitrate = cis-homoaconitate + H2O. The catalysed reaction is (2R,3S)-homoisocitrate = cis-homoaconitate + H2O. It catalyses the reaction cis-(homo)2aconitate + H2O = (2R,3S)-iso(homo)2citrate. It carries out the reaction cis-(homo)3aconitate + H2O = (2R,3S)-iso(homo)3citrate. The enzyme catalyses (R)-malate = maleate + H2O. The catalysed reaction is cis-aconitate + H2O = D-threo-isocitrate. It functions in the pathway organic acid metabolism; 2-oxosuberate biosynthesis. In terms of biological role, component of a hydro-lyase with broad substrate specificity for cis-unsaturated tricarboxylic acids. Catalyzes both the reversible dehydration of (R)-homocitrate ((R)-2-hydroxybutane-1,2,4-tricarboxylate) to produce cis-homoaconitate ((Z)-but-1-ene-1,2,4-tricarboxylate), and its hydration to homoisocitrate ((1R,2S)-1-hydroxybutane-1,2,4-tricarboxylate). Is also able to hydrate the analogous longer chain substrates cis-homo(2)-aconitate, cis-homo(3)-aconitate, and even the non-physiological cis-homo(4)-aconitate with similar efficiency. These reactions are part of the biosynthesis pathway of coenzyme B. Can also catalyze the hydration of maleate to (R)-malate, and that of cis-aconitate. Cannot catalyze the hydration of citraconate and the dehydration of (S)-homocitrate, citramalate, 2-isopropylmalate, 3-isopropylmalate, citrate or threo-DL-isocitrate. In Methanocaldococcus jannaschii (strain ATCC 43067 / DSM 2661 / JAL-1 / JCM 10045 / NBRC 100440) (Methanococcus jannaschii), this protein is Methanogen homoaconitase small subunit (hacB).